Here is a 169-residue protein sequence, read N- to C-terminus: Peptide deformylase 1 (169 aa).

The Fe cation site is built by cysteine 93 and histidine 135. The active site involves glutamate 136. Histidine 139 is a Fe cation binding site.

Belongs to the polypeptide deformylase family. Requires Fe(2+) as cofactor.

The enzyme catalyses N-terminal N-formyl-L-methionyl-[peptide] + H2O = N-terminal L-methionyl-[peptide] + formate. In terms of biological role, removes the formyl group from the N-terminal Met of newly synthesized proteins. Requires at least a dipeptide for an efficient rate of reaction. N-terminal L-methionine is a prerequisite for activity but the enzyme has broad specificity at other positions. The protein is Peptide deformylase 1 of Corynebacterium efficiens (strain DSM 44549 / YS-314 / AJ 12310 / JCM 11189 / NBRC 100395).